We begin with the raw amino-acid sequence, 468 residues long: Ribulose bisphosphate carboxylase large chain (468 aa).

K5 carries the N6,N6,N6-trimethyllysine modification. Substrate is bound by residues N114 and T164. Residue K166 is the Proton acceptor of the active site. Substrate is bound at residue K168. 3 residues coordinate Mg(2+): K192, D194, and E195. K192 carries the post-translational modification N6-carboxylysine. H285 (proton acceptor) is an active-site residue. Positions 286, 318, and 370 each coordinate substrate.

This sequence belongs to the RuBisCO large chain family. Type I subfamily. In terms of assembly, heterohexadecamer of 8 large chains and 8 small chains; disulfide-linked. The disulfide link is formed within the large subunit homodimers. The cofactor is Mg(2+). In terms of processing, the disulfide bond which can form in the large chain dimeric partners within the hexadecamer appears to be associated with oxidative stress and protein turnover.

The protein localises to the plastid. The protein resides in the chloroplast. It catalyses the reaction 2 (2R)-3-phosphoglycerate + 2 H(+) = D-ribulose 1,5-bisphosphate + CO2 + H2O. It carries out the reaction D-ribulose 1,5-bisphosphate + O2 = 2-phosphoglycolate + (2R)-3-phosphoglycerate + 2 H(+). Its function is as follows. RuBisCO catalyzes two reactions: the carboxylation of D-ribulose 1,5-bisphosphate, the primary event in carbon dioxide fixation, as well as the oxidative fragmentation of the pentose substrate in the photorespiration process. Both reactions occur simultaneously and in competition at the same active site. This is Ribulose bisphosphate carboxylase large chain from Anthospermum herbaceum.